A 57-amino-acid polypeptide reads, in one-letter code: UPF0057 membrane protein T23F2.5 (57 aa).

A run of 2 helical transmembrane segments spans residues 3-23 (LTCT…IGVW) and 36-56 (ILLT…VILA).

Belongs to the UPF0057 (PMP3) family.

The protein localises to the membrane. The polypeptide is UPF0057 membrane protein T23F2.5 (Caenorhabditis elegans).